The sequence spans 173 residues: MPIILGVDPGSRITGYGVIQCQGRQQIYLGSGCIRTQSDDLPSRLKVIFDGISEIIRQYQPDEFAIERVFLAKNADSALKLGQARGAAIVAATNAQLPVAEYSATQIKNAVVGTGRAQKSQVQHMVQQILKLPAAPQADAADALGVALCHFHTYQSLIAMGGKASVRTYGRYR.

Catalysis depends on residues Asp8, Glu67, and Asp139. Mg(2+)-binding residues include Asp8, Glu67, and Asp139.

This sequence belongs to the RuvC family. In terms of assembly, homodimer which binds Holliday junction (HJ) DNA. The HJ becomes 2-fold symmetrical on binding to RuvC with unstacked arms; it has a different conformation from HJ DNA in complex with RuvA. In the full resolvosome a probable DNA-RuvA(4)-RuvB(12)-RuvC(2) complex forms which resolves the HJ. The cofactor is Mg(2+).

It is found in the cytoplasm. The enzyme catalyses Endonucleolytic cleavage at a junction such as a reciprocal single-stranded crossover between two homologous DNA duplexes (Holliday junction).. Its function is as follows. The RuvA-RuvB-RuvC complex processes Holliday junction (HJ) DNA during genetic recombination and DNA repair. Endonuclease that resolves HJ intermediates. Cleaves cruciform DNA by making single-stranded nicks across the HJ at symmetrical positions within the homologous arms, yielding a 5'-phosphate and a 3'-hydroxyl group; requires a central core of homology in the junction. The consensus cleavage sequence is 5'-(A/T)TT(C/G)-3'. Cleavage occurs on the 3'-side of the TT dinucleotide at the point of strand exchange. HJ branch migration catalyzed by RuvA-RuvB allows RuvC to scan DNA until it finds its consensus sequence, where it cleaves and resolves the cruciform DNA. This is Crossover junction endodeoxyribonuclease RuvC from Shewanella loihica (strain ATCC BAA-1088 / PV-4).